Consider the following 100-residue polypeptide: Large ribosomal subunit protein uL23 (100 aa).

It belongs to the universal ribosomal protein uL23 family. In terms of assembly, part of the 50S ribosomal subunit. Contacts protein L29, and trigger factor when it is bound to the ribosome.

Its function is as follows. One of the early assembly proteins it binds 23S rRNA. One of the proteins that surrounds the polypeptide exit tunnel on the outside of the ribosome. Forms the main docking site for trigger factor binding to the ribosome. The chain is Large ribosomal subunit protein uL23 from Dechloromonas aromatica (strain RCB).